Reading from the N-terminus, the 589-residue chain is Serine/threonine-protein kinase STE7 homolog (589 aa).

Residues 1-18 are compositionally biased toward basic and acidic residues; sequence MTRTTRIDTQEATKHKDL. 2 disordered regions span residues 1–162 and 185–232; these read MTRT…DPDN and RQHY…PASS. Low complexity predominate over residues 24-33; it reads PLSLSSNPNP. Residues 57-69 are compositionally biased toward polar residues; it reads VKSTSGSLRSSDM. Positions 92-121 are enriched in low complexity; that stretch reads PTASSSATSTPTSNITGSSSASSIQFAQKS. Composition is skewed to polar residues over residues 127 to 136 and 144 to 162; these read IVSQTLSRPS and SGYS…DPDN. A compositionally biased stretch (basic residues) spans 185–203; that stretch reads RQHYQNSHHHLPTTNRKRQ. Residues 206–220 are compositionally biased toward low complexity; it reads ISSISPTKSSAASSP. A Protein kinase domain is found at 249–565; the sequence is LLTLKQLGSG…QLLEDKEHFF (317 aa). Residues 255–263 and lysine 278 contribute to the ATP site; that span reads LGSGNSGSV. Aspartate 374 functions as the Proton acceptor in the catalytic mechanism. At serine 402 the chain carries Phosphoserine. Position 408 is a phosphothreonine (threonine 408). The interval 473 to 499 is disordered; it reads IAAERNGQNSPSRSRKNKQKGNGYNSY.

This sequence belongs to the protein kinase superfamily. STE Ser/Thr protein kinase family. MAP kinase kinase subfamily.

It carries out the reaction L-seryl-[protein] + ATP = O-phospho-L-seryl-[protein] + ADP + H(+). The catalysed reaction is L-threonyl-[protein] + ATP = O-phospho-L-threonyl-[protein] + ADP + H(+). The enzyme catalyses L-tyrosyl-[protein] + ATP = O-phospho-L-tyrosyl-[protein] + ADP + H(+). This is Serine/threonine-protein kinase STE7 homolog (HST7) from Candida albicans (strain WO-1) (Yeast).